We begin with the raw amino-acid sequence, 197 residues long: ATP synthase subunit delta (197 aa).

Positions 1 to 16 (MSSAVSASPQAASPQQ) are enriched in low complexity. The disordered stretch occupies residues 1 to 20 (MSSAVSASPQAASPQQDRTS).

It belongs to the ATPase delta chain family. F-type ATPases have 2 components, F(1) - the catalytic core - and F(0) - the membrane proton channel. F(1) has five subunits: alpha(3), beta(3), gamma(1), delta(1), epsilon(1). F(0) has three main subunits: a(1), b(2) and c(10-14). The alpha and beta chains form an alternating ring which encloses part of the gamma chain. F(1) is attached to F(0) by a central stalk formed by the gamma and epsilon chains, while a peripheral stalk is formed by the delta and b chains.

The protein resides in the cell inner membrane. F(1)F(0) ATP synthase produces ATP from ADP in the presence of a proton or sodium gradient. F-type ATPases consist of two structural domains, F(1) containing the extramembraneous catalytic core and F(0) containing the membrane proton channel, linked together by a central stalk and a peripheral stalk. During catalysis, ATP synthesis in the catalytic domain of F(1) is coupled via a rotary mechanism of the central stalk subunits to proton translocation. In terms of biological role, this protein is part of the stalk that links CF(0) to CF(1). It either transmits conformational changes from CF(0) to CF(1) or is implicated in proton conduction. This chain is ATP synthase subunit delta, found in Acidiphilium cryptum (strain JF-5).